Reading from the N-terminus, the 632-residue chain is tRNA uridine 5-carboxymethylaminomethyl modification enzyme MnmG (632 aa).

Residues 13-18 (GGGHAG), Val-125, and Ser-180 contribute to the FAD site. 273 to 287 (GPRYCPSIEDKVMRF) provides a ligand contact to NAD(+). Gln-370 lines the FAD pocket.

The protein belongs to the MnmG family. In terms of assembly, homodimer. Heterotetramer of two MnmE and two MnmG subunits. Requires FAD as cofactor.

It is found in the cytoplasm. NAD-binding protein involved in the addition of a carboxymethylaminomethyl (cmnm) group at the wobble position (U34) of certain tRNAs, forming tRNA-cmnm(5)s(2)U34. This chain is tRNA uridine 5-carboxymethylaminomethyl modification enzyme MnmG, found in Proteus mirabilis (strain HI4320).